A 338-amino-acid polypeptide reads, in one-letter code: ATPase GET3 (338 aa).

33-40 is a binding site for ATP; the sequence is KGGVGKTT. Aspartate 62 is an active-site residue. ATP contacts are provided by glutamate 242 and asparagine 269. Cysteine 280 and cysteine 283 together coordinate Zn(2+).

This sequence belongs to the arsA ATPase family. In terms of assembly, homodimer.

The protein resides in the cytoplasm. It is found in the endoplasmic reticulum. In terms of biological role, ATPase required for the post-translational delivery of tail-anchored (TA) proteins to the endoplasmic reticulum. Recognizes and selectively binds the transmembrane domain of TA proteins in the cytosol. This complex then targets to the endoplasmic reticulum by membrane-bound receptors, where the tail-anchored protein is released for insertion. This process is regulated by ATP binding and hydrolysis. ATP binding drives the homodimer towards the closed dimer state, facilitating recognition of newly synthesized TA membrane proteins. ATP hydrolysis is required for insertion. Subsequently, the homodimer reverts towards the open dimer state, lowering its affinity for the membrane-bound receptor, and returning it to the cytosol to initiate a new round of targeting. This chain is ATPase GET3, found in Uncinocarpus reesii (strain UAMH 1704).